A 37-amino-acid polypeptide reads, in one-letter code: MKIRASVRKICEKCRLIRRQGRIIVICSNPRHKQRQG.

This sequence belongs to the bacterial ribosomal protein bL36 family.

It localises to the plastid. The protein localises to the chloroplast. The protein is Large ribosomal subunit protein bL36c of Phalaenopsis aphrodite subsp. formosana (Moth orchid).